The chain runs to 147 residues: UPF0179 protein MTH_609 (147 aa).

The protein belongs to the UPF0179 family.

The protein is UPF0179 protein MTH_609 of Methanothermobacter thermautotrophicus (strain ATCC 29096 / DSM 1053 / JCM 10044 / NBRC 100330 / Delta H) (Methanobacterium thermoautotrophicum).